The sequence spans 94 residues: DNA-directed RNA polymerase subunit Rpo11 (94 aa).

It belongs to the archaeal Rpo11/eukaryotic RPB11/RPC19 RNA polymerase subunit family. As to quaternary structure, part of the RNA polymerase complex.

It localises to the cytoplasm. The enzyme catalyses RNA(n) + a ribonucleoside 5'-triphosphate = RNA(n+1) + diphosphate. Its function is as follows. DNA-dependent RNA polymerase (RNAP) catalyzes the transcription of DNA into RNA using the four ribonucleoside triphosphates as substrates. The polypeptide is DNA-directed RNA polymerase subunit Rpo11 (Thermococcus kodakarensis (strain ATCC BAA-918 / JCM 12380 / KOD1) (Pyrococcus kodakaraensis (strain KOD1))).